The primary structure comprises 246 residues: MSAVTAAGYQAPQERSQSVTLPARPEPITLKPSETAVVVVDMQNAYSTEGGYVDLAGFDIAGAKGTIANIKKTLDAARAAGVQVIYFQNGWDKDYVEAGGPGSPNYHKSNALKTMRQRPELQGQLLAKGTWDYAIVDELQPQPGDILVPKTRYSGFFNTNMDSVLRARGIRNLVFVGIATNVCVESSLRDAFHLEYFGVMLEDATHHLGPDFIQQATVYNVEKFFGWVATVNDFCATVSQAAPTEA.

A disordered region spans residues 1–27 (MSAVTAAGYQAPQERSQSVTLPARPEP). D41 (proton acceptor) is an active-site residue. K150 is a catalytic residue. C183 functions as the Nucleophile in the catalytic mechanism.

The protein belongs to the isochorismatase family. RutB subfamily.

It carries out the reaction (Z)-3-ureidoacrylate + H2O + H(+) = (Z)-3-aminoacrylate + NH4(+) + CO2. The catalysed reaction is (Z)-3-ureidoacrylate + H2O = (Z)-3-aminoacrylate + carbamate + H(+). It catalyses the reaction (Z)-2-methylureidoacrylate + H2O + H(+) = (Z)-2-methylaminoacrylate + NH4(+) + CO2. In terms of biological role, hydrolyzes ureidoacrylate to form aminoacrylate and carbamate. The carbamate hydrolyzes spontaneously, thereby releasing one of the nitrogen atoms of the pyrimidine ring as ammonia and one of its carbon atoms as CO2. The protein is Ureidoacrylate amidohydrolase RutB of Rhizobium rhizogenes (strain K84 / ATCC BAA-868) (Agrobacterium radiobacter).